A 965-amino-acid polypeptide reads, in one-letter code: Isoleucine--tRNA ligase (965 aa).

The 'HIGH' region motif lies at 68-78 (PYANGSLHMGH). Glu582 is an L-isoleucyl-5'-AMP binding site. A 'KMSKS' region motif is present at residues 623 to 627 (KMSKS). Lys626 serves as a coordination point for ATP. Zn(2+) is bound by residues Cys936, Cys939, Cys956, and Cys959.

It belongs to the class-I aminoacyl-tRNA synthetase family. IleS type 1 subfamily. As to quaternary structure, monomer. Requires Zn(2+) as cofactor.

The protein localises to the cytoplasm. It carries out the reaction tRNA(Ile) + L-isoleucine + ATP = L-isoleucyl-tRNA(Ile) + AMP + diphosphate. Its function is as follows. Catalyzes the attachment of isoleucine to tRNA(Ile). As IleRS can inadvertently accommodate and process structurally similar amino acids such as valine, to avoid such errors it has two additional distinct tRNA(Ile)-dependent editing activities. One activity is designated as 'pretransfer' editing and involves the hydrolysis of activated Val-AMP. The other activity is designated 'posttransfer' editing and involves deacylation of mischarged Val-tRNA(Ile). This Prochlorococcus marinus (strain MIT 9515) protein is Isoleucine--tRNA ligase.